A 173-amino-acid chain; its full sequence is Shikimate kinase 1 (173 aa).

14–19 lines the ATP pocket; that stretch reads GAGKST. Ser-18 provides a ligand contact to Mg(2+). 3 residues coordinate substrate: Asp-36, Arg-60, and Gly-82. Residue Arg-120 participates in ATP binding. Residue Arg-140 participates in substrate binding. Gln-157 contacts ATP.

It belongs to the shikimate kinase family. Monomer. Requires Mg(2+) as cofactor.

Its subcellular location is the cytoplasm. The enzyme catalyses shikimate + ATP = 3-phosphoshikimate + ADP + H(+). Its pathway is metabolic intermediate biosynthesis; chorismate biosynthesis; chorismate from D-erythrose 4-phosphate and phosphoenolpyruvate: step 5/7. Functionally, catalyzes the specific phosphorylation of the 3-hydroxyl group of shikimic acid using ATP as a cosubstrate. In Yersinia pseudotuberculosis serotype O:1b (strain IP 31758), this protein is Shikimate kinase 1.